A 748-amino-acid polypeptide reads, in one-letter code: MAADKAGEQGAEKHEGSANCSGISDQEKELSRSALQAFTAGNYEACLQHLGELKEINKDDYKVILNAAVAEFYKSDKTTTDLLKQTLNQLRNEVHSAVDEMDSLDDVENSMLYYNQAVILYYLRQHMEAISVGEKLYQFIEPFEEKFAHAVCFLLVDLYLLTFQTEKALHLLVVLEKMILQGNSNNKNGKNNETNSNANNKELFAQKGDGGVNVEAAKSKIHQYKVRAYIQMKSLKACKREIKSVMNTSGNSAPSLFLKSNFEYLRGNYRKAVKLLNSSNIAEYPGFMKTGECVRCMFWNNLGCIHFAMGKHNLGLFYFKKALHENDNACAQLPSENSDPGKKFSGRPMCTLLTNKRYELLYNCGIQLLHIGRPLAAFEYLVEAVQVYHSNPRLWLRLAECCIAANKGTSEQETKGLPSKKGIVQSIVGQGYHRKIVLASQSVQNLLYNDGESSAIPVASMEFAAICLRNALLLLPEDQLETKQENGSKASSQTVNTDSSGESSDVCSNKNHEGDKFIPAPPSSPLRRQEVENLRCSVLACIAYVALALGDNLMALNHAEKLLQQPRLSGSLKFLGHLYAAEALISLDRISDAITHLNPENVTDVSLGVSSNEQEQGSDKGENEPMESAGKQIPQCYPSSVTSARTMMLFNLGSAYCLRSEYDKARKCLHQAASMIHPKEIPPEAILLAVYLELQNGNTQLALQIIKRNQLLPSIRMMSDLRKKPLFQTMHQPMQPIQMPAFAAAQRK.

A compositionally biased stretch (basic and acidic residues) spans 1 to 16 (MAADKAGEQGAEKHEG). 3 disordered regions span residues 1–25 (MAAD…GISD), 483–524 (KQEN…PPSS), and 605–634 (VSLG…KQIP). 2 stretches are compositionally biased toward polar residues: residues 487–509 (GSKA…VCSN) and 605–615 (VSLGVSSNEQE).

Belongs to the CNOT10 family. Component of the CCR4-NOT complex. cnot10 and cnot11 form a subcomplex docked to the cnot1 scaffold.

The protein resides in the cytoplasm. The protein localises to the nucleus. Its function is as follows. Component of the CCR4-NOT complex which is one of the major cellular mRNA deadenylases and is linked to various cellular processes including bulk mRNA degradation, miRNA-mediated repression, translational repression during translational initiation and general transcription regulation. Additional complex functions may be a consequence of its influence on mRNA expression. Is not required for association of CNOT7 to the CCR4-NOT complex. This is CCR4-NOT transcription complex subunit 10-B (cnot10-b) from Xenopus laevis (African clawed frog).